The sequence spans 529 residues: Nucleolar protein 58 (529 aa).

Thr34 is subject to Phosphothreonine. Ser109 carries the post-translational modification Phosphoserine. The sufficient for interaction with NOPCHAP1 stretch occupies residues Ala155–Asp400. Residue Lys157 forms a Glycyl lysine isopeptide (Lys-Gly) (interchain with G-Cter in SUMO2) linkage. Positions Ile282–Asp400 constitute a Nop domain. Phosphoserine is present on residues Ser304 and Ser351. Glycyl lysine isopeptide (Lys-Gly) (interchain with G-Cter in SUMO2) cross-links involve residues Lys353, Lys411, Lys415, Lys422, Lys426, Lys441, Lys444, and Lys465. Residues Thr409–Asp529 form a disordered region. A compositionally biased stretch (basic and acidic residues) spans Ala414–Thr427. Lys467 participates in a covalent cross-link: Glycyl lysine isopeptide (Lys-Gly) (interchain with G-Cter in SUMO); alternate. A Glycyl lysine isopeptide (Lys-Gly) (interchain with G-Cter in SUMO1); alternate cross-link involves residue Lys467. Residue Lys467 forms a Glycyl lysine isopeptide (Lys-Gly) (interchain with G-Cter in SUMO2); alternate linkage. A compositionally biased stretch (acidic residues) spans Glu469–Glu481. Position 483 is a phosphoserine (Ser483). Lys485 is covalently cross-linked (Glycyl lysine isopeptide (Lys-Gly) (interchain with G-Cter in SUMO2)). Positions Lys485 to His495 are enriched in basic residues. A Glycyl lysine isopeptide (Lys-Gly) (interchain with G-Cter in SUMO); alternate cross-link involves residue Lys497. A Glycyl lysine isopeptide (Lys-Gly) (interchain with G-Cter in SUMO2); alternate cross-link involves residue Lys497. Ser502 and Ser514 each carry phosphoserine. The segment covering Lys517–Asp529 has biased composition (basic residues).

The protein belongs to the NOP5/NOP56 family. Core component of box C/D small nucleolar ribonucleoprotein (snoRNP) particles; the core proteins SNU13, NOP56, NOP58 and FBL or FBLL1 assemble stepwise onto the snoRNA. Interacts with NOLC1/Nopp140. Interacts with NOPCHAP1, NUFIP1, RUVBL1 and RUVBL2; NOPCHAP1 bridges the association of NOP58 with RUVBL1:RUVBL2 and NUFIP1. Interacts with PIH1D1. Part of the small subunit (SSU) processome, composed of more than 70 proteins and the RNA chaperone small nucleolar RNA (snoRNA) U3. Sumoylation is essential for high-affinity binding to snoRNAs. In terms of tissue distribution, ubiquitous.

It localises to the nucleus. Its subcellular location is the nucleolus. The protein localises to the nucleoplasm. Required for the biogenesis of box C/D snoRNAs such as U3, U8 and U14 snoRNAs. Part of the small subunit (SSU) processome, first precursor of the small eukaryotic ribosomal subunit. During the assembly of the SSU processome in the nucleolus, many ribosome biogenesis factors, an RNA chaperone and ribosomal proteins associate with the nascent pre-rRNA and work in concert to generate RNA folding, modifications, rearrangements and cleavage as well as targeted degradation of pre-ribosomal RNA by the RNA exosome. Core component of box C/D small nucleolar ribonucleoprotein (snoRNP) complexes that function in methylation of multiple sites on ribosomal RNAs (rRNAs) and messenger RNAs (mRNAs). This is Nucleolar protein 58 from Homo sapiens (Human).